A 332-amino-acid polypeptide reads, in one-letter code: Fructose-1,6-bisphosphatase class 1 (332 aa).

Residues Glu-89, Asp-110, Leu-112, and Asp-113 each contribute to the Mg(2+) site. Substrate contacts are provided by residues 113–116, Asn-206, Tyr-239, 257–259, and Lys-269; these read DGSS and YLY. Glu-275 is a binding site for Mg(2+).

Belongs to the FBPase class 1 family. As to quaternary structure, homotetramer. Requires Mg(2+) as cofactor.

The protein resides in the cytoplasm. The catalysed reaction is beta-D-fructose 1,6-bisphosphate + H2O = beta-D-fructose 6-phosphate + phosphate. It participates in carbohydrate biosynthesis; gluconeogenesis. In Escherichia coli O157:H7, this protein is Fructose-1,6-bisphosphatase class 1.